The primary structure comprises 354 residues: cAMP-dependent protein kinase catalytic subunit 2 (354 aa).

In terms of domain architecture, Protein kinase spans 45-301; the sequence is YITRAVLGNG…SSDVKSHPWF (257 aa). ATP-binding positions include 51–59 and Lys-74; that span reads LGNGSFGTV. Asp-168 (proton acceptor) is an active-site residue. In terms of domain architecture, AGC-kinase C-terminal spans 302–354; the sequence is QGVDWFGILNQEVTAPYQPTISGAEDLSNFENFEFKDRYKSRINRHPELFANF.

It belongs to the protein kinase superfamily. AGC Ser/Thr protein kinase family. cAMP subfamily. In terms of tissue distribution, more abundant in adult body than adult head.

It catalyses the reaction L-seryl-[protein] + ATP = O-phospho-L-seryl-[protein] + ADP + H(+). The catalysed reaction is L-threonyl-[protein] + ATP = O-phospho-L-threonyl-[protein] + ADP + H(+). The chain is cAMP-dependent protein kinase catalytic subunit 2 (Pka-C2) from Drosophila melanogaster (Fruit fly).